Reading from the N-terminus, the 283-residue chain is Bifunctional protein FolD (283 aa).

NADP(+)-binding positions include 164–166, I189, and I230; that span reads GSS.

It belongs to the tetrahydrofolate dehydrogenase/cyclohydrolase family. As to quaternary structure, homodimer.

The enzyme catalyses (6R)-5,10-methylene-5,6,7,8-tetrahydrofolate + NADP(+) = (6R)-5,10-methenyltetrahydrofolate + NADPH. It carries out the reaction (6R)-5,10-methenyltetrahydrofolate + H2O = (6R)-10-formyltetrahydrofolate + H(+). It participates in one-carbon metabolism; tetrahydrofolate interconversion. Functionally, catalyzes the oxidation of 5,10-methylenetetrahydrofolate to 5,10-methenyltetrahydrofolate and then the hydrolysis of 5,10-methenyltetrahydrofolate to 10-formyltetrahydrofolate. This Fusobacterium nucleatum subsp. nucleatum (strain ATCC 25586 / DSM 15643 / BCRC 10681 / CIP 101130 / JCM 8532 / KCTC 2640 / LMG 13131 / VPI 4355) protein is Bifunctional protein FolD.